We begin with the raw amino-acid sequence, 264 residues long: H-2 class II histocompatibility antigen, I-A beta chain (264 aa).

The N-terminal stretch at 1–31 (MVWLPRVPCVAAVILLLTVLSPPVALVRDSR) is a signal peptide. Residues 32–121 (PWFLEYCKSE…IFDNFLVPRR (90 aa)) form a beta-1 region. The Extracellular segment spans residues 32-225 (PWFLEYCKSE…KAQSTSAQNK (194 aa)). 2 disulfides stabilise this stretch: cysteine 42-cysteine 106 and cysteine 144-cysteine 200. A glycan (N-linked (GlcNAc...) asparagine) is linked at asparagine 46. The segment at 122–215 (VEPTVTVYPT…SLTDPVTVEW (94 aa)) is beta-2. The 91-residue stretch at 124-214 (PTVTVYPTKT…PSLTDPVTVE (91 aa)) folds into the Ig-like C1-type domain. Positions 216–225 (KAQSTSAQNK) are connecting peptide. Residues 226–248 (MLSGVGGFVLGLLFLRAGLFIYF) form a helical membrane-spanning segment. Topologically, residues 249-264 (RNQKGQSGLQPTGLLS) are cytoplasmic.

Belongs to the MHC class II family. Post-translationally, ubiquitinated in immature dendritic cells leading to down-regulation of MHC class II.

It is found in the membrane. The protein is H-2 class II histocompatibility antigen, I-A beta chain (H2-Eb1) of Mus musculus (Mouse).